Reading from the N-terminus, the 365-residue chain is Succinyl-diaminopimelate desuccinylase (365 aa).

Histidine 64 serves as a coordination point for Zn(2+). Aspartate 66 is a catalytic residue. Position 95 (aspartate 95) interacts with Zn(2+). Catalysis depends on glutamate 125, which acts as the Proton acceptor. Residues glutamate 126, glutamate 154, and histidine 339 each coordinate Zn(2+).

This sequence belongs to the peptidase M20A family. DapE subfamily. As to quaternary structure, homodimer. The cofactor is Zn(2+). It depends on Co(2+) as a cofactor.

It catalyses the reaction N-succinyl-(2S,6S)-2,6-diaminopimelate + H2O = (2S,6S)-2,6-diaminopimelate + succinate. The protein operates within amino-acid biosynthesis; L-lysine biosynthesis via DAP pathway; LL-2,6-diaminopimelate from (S)-tetrahydrodipicolinate (succinylase route): step 3/3. In terms of biological role, catalyzes the hydrolysis of N-succinyl-L,L-diaminopimelic acid (SDAP), forming succinate and LL-2,6-diaminopimelate (DAP), an intermediate involved in the bacterial biosynthesis of lysine and meso-diaminopimelic acid, an essential component of bacterial cell walls. This is Succinyl-diaminopimelate desuccinylase from Nautilia profundicola (strain ATCC BAA-1463 / DSM 18972 / AmH).